A 257-amino-acid chain; its full sequence is NAD-capped RNA hydrolase NudC (257 aa).

Positions 25 and 69 each coordinate substrate. Zn(2+) contacts are provided by cysteine 98 and cysteine 101. Glutamate 111 is a substrate binding site. Zn(2+) is bound by residues cysteine 116 and cysteine 119. Tyrosine 124 is a binding site for substrate. The region spanning 125–248 (PQIAPCIIVA…TVARRLIEDT (124 aa)) is the Nudix hydrolase domain. A divalent metal cation-binding residues include alanine 158, glutamate 174, and glutamate 178. Positions 159 to 180 (GFVEVGETLEQAVAREVMEESG) match the Nudix box motif. 192-199 (QPWPFPQS) contacts substrate. A divalent metal cation is bound at residue glutamate 219. Position 241 (alanine 241) interacts with substrate.

It belongs to the Nudix hydrolase family. NudC subfamily. As to quaternary structure, homodimer. Mg(2+) serves as cofactor. The cofactor is Mn(2+). It depends on Zn(2+) as a cofactor.

The enzyme catalyses a 5'-end NAD(+)-phospho-ribonucleoside in mRNA + H2O = a 5'-end phospho-adenosine-phospho-ribonucleoside in mRNA + beta-nicotinamide D-ribonucleotide + 2 H(+). It catalyses the reaction NAD(+) + H2O = beta-nicotinamide D-ribonucleotide + AMP + 2 H(+). It carries out the reaction NADH + H2O = reduced beta-nicotinamide D-ribonucleotide + AMP + 2 H(+). MRNA decapping enzyme that specifically removes the nicotinamide adenine dinucleotide (NAD) cap from a subset of mRNAs by hydrolyzing the diphosphate linkage to produce nicotinamide mononucleotide (NMN) and 5' monophosphate mRNA. The NAD-cap is present at the 5'-end of some mRNAs and stabilizes RNA against 5'-processing. Has preference for mRNAs with a 5'-end purine. Catalyzes the hydrolysis of a broad range of dinucleotide pyrophosphates. This Shigella dysenteriae serotype 1 (strain Sd197) protein is NAD-capped RNA hydrolase NudC.